We begin with the raw amino-acid sequence, 957 residues long: ERC protein 2 (957 aa).

Positions 1–13 (MYGSARTISNLEG) are enriched in polar residues. The tract at residues 1 to 44 (MYGSARTISNLEGSPSRSPRLPRSPRLGHRRTSSGGGGGTGKTL) is disordered. A compositionally biased stretch (low complexity) spans 14–25 (SPSRSPRLPRSP). A phosphoserine mark is found at Ser-65 and Ser-666. The stretch at 140–917 (RQVRDSTMLD…RMKLMADNYD (778 aa)) forms a coiled coil. Residues 922 to 943 (HYHHHHHHHHHRSPGRSQHSNH) are compositionally biased toward basic residues. Positions 922–957 (HYHHHHHHHHHRSPGRSQHSNHRPSPDQDDEEGIWA) are disordered. The segment covering 948–957 (DQDDEEGIWA) has biased composition (acidic residues).

Interacts with BSN, ERC1, PPFIA1, PPFIA2, PPFIA3 and PPFIA4. Interacts through its C-terminus with the PDZ domain of RIMS1. Part of a complex consisting of ERC2, RIMS1 and UNC13A. Expressed throughout the central nervous system, including hippocampus, cortex, cerebellum and olfactory bulb.

Its subcellular location is the cytoplasm. The protein resides in the synapse. The protein localises to the presynaptic active zone. It localises to the cytoskeleton. Thought to be involved in the organization of the cytomatrix at the nerve terminals active zone (CAZ) which regulates neurotransmitter release. Seems to act together with BSN. May recruit liprin-alpha proteins to the CAZ. This Mus musculus (Mouse) protein is ERC protein 2 (Erc2).